Here is a 119-residue protein sequence, read N- to C-terminus: Large ribosomal subunit protein bL20 (119 aa).

Belongs to the bacterial ribosomal protein bL20 family.

Its function is as follows. Binds directly to 23S ribosomal RNA and is necessary for the in vitro assembly process of the 50S ribosomal subunit. It is not involved in the protein synthesizing functions of that subunit. This chain is Large ribosomal subunit protein bL20, found in Shewanella sediminis (strain HAW-EB3).